The following is a 125-amino-acid chain: Large ribosomal subunit protein bL19 (125 aa).

This sequence belongs to the bacterial ribosomal protein bL19 family.

In terms of biological role, this protein is located at the 30S-50S ribosomal subunit interface and may play a role in the structure and function of the aminoacyl-tRNA binding site. This Ehrlichia ruminantium (strain Welgevonden) protein is Large ribosomal subunit protein bL19.